Here is a 734-residue protein sequence, read N- to C-terminus: Photosystem I P700 chlorophyll a apoprotein A2 (734 aa).

The next 8 membrane-spanning stretches (helical) occupy residues 46 to 69, 135 to 158, 175 to 199, 273 to 291, 330 to 353, 369 to 395, 417 to 439, and 517 to 535; these read IFASHFGQLAIIFLWTSGNLFHVA, LYTGALFLLFLSAISLIGGWLHLQ, LNHHLSGLFGVSSLAWTGHLVHVAI, MAHHHLAIAFIFLIAGHMY, LHFQLGLALACLGVITSLVAQHMY, AASYTHHQYIAGFIMTGAFAHGAIFFI, AIISHLSWASLFLGFHTLGLYVH, and FLVHHAIALGLHTTTLILV. Positions 559 and 568 each coordinate [4Fe-4S] cluster. A run of 2 helical transmembrane segments spans residues 575 to 596 and 643 to 665; these read AFYLAVFWMLNTIGWVTFYWHW and LSVWAWMFLFGHLVWATGFMFLI. Residues His-654, Met-662, and Tyr-670 each coordinate chlorophyll a. Trp-671 is a phylloquinone binding site. Residues 707–727 traverse the membrane as a helical segment; that stretch reads LVGLAHFSVGYIFTYAAFLIA.

Belongs to the PsaA/PsaB family. The PsaA/B heterodimer binds the P700 chlorophyll special pair and subsequent electron acceptors. PSI consists of a core antenna complex that captures photons, and an electron transfer chain that converts photonic excitation into a charge separation. The eukaryotic PSI reaction center is composed of at least 11 subunits. It depends on P700 is a chlorophyll a/chlorophyll a' dimer, A0 is one or more chlorophyll a, A1 is one or both phylloquinones and FX is a shared 4Fe-4S iron-sulfur center. as a cofactor.

It localises to the plastid. It is found in the chloroplast thylakoid membrane. It catalyses the reaction reduced [plastocyanin] + hnu + oxidized [2Fe-2S]-[ferredoxin] = oxidized [plastocyanin] + reduced [2Fe-2S]-[ferredoxin]. Functionally, psaA and PsaB bind P700, the primary electron donor of photosystem I (PSI), as well as the electron acceptors A0, A1 and FX. PSI is a plastocyanin-ferredoxin oxidoreductase, converting photonic excitation into a charge separation, which transfers an electron from the donor P700 chlorophyll pair to the spectroscopically characterized acceptors A0, A1, FX, FA and FB in turn. Oxidized P700 is reduced on the lumenal side of the thylakoid membrane by plastocyanin. This chain is Photosystem I P700 chlorophyll a apoprotein A2, found in Acorus calamus (Sweet flag).